The chain runs to 461 residues: MLKVLMPTIMLILTTWLTKPAWLWPTMTTNSLLVATISLTWLKWDSESGWKSLNSSMATDPLSTPLLILTCWLLPLMILASQNHMFMEPLNRQRSFISLLISLQTFLIMAFGATEIILFYIMFEATLIPTLIIITRWGNQTERLNAGTYFLFYTVMGSLPLLVALLMTQNNLGTLSMPLIQHMYQMKLHTHGDMMWWTACLLAFLVKMPLYGVHLWLPKAHVEAPIAGSMVLAAVLLKLGGYGMMRLIMMLAPMTKTLAYPFIILALWGIIMTGSICLRQTDLKSLIAYSSVGHMGLVAAGILTQTPWGFTGATVLMIAHGLTSSALFCLANTNYERTHSRTMILARGMQVILPLMTFWWLMMNLANLALPPSTNLMGELLIITMTFNWSNWTLTMTGLGMLITAIYSLHMFLTTQRGLMTNHIISIEPSHTREHLLMTMHALPMLLLILKPELIWGWSYX.

The next 13 helical transmembrane spans lie at 20–42 (PAWL…LTWL), 61–81 (PLST…ILAS), 93–113 (QRSF…AFGA), 114–134 (TEII…LIII), 147–167 (GTYF…ALLM), 197–217 (WTAC…HLWL), 225–245 (PIAG…YGMM), 258–278 (LAYP…SICL), 285–304 (SLIA…GILT), 309–331 (GFTG…FCLA), 351–371 (VILP…LALP), 393–413 (TLTM…HMFL), and 436–456 (LLMT…ELIW).

It belongs to the complex I subunit 4 family.

It is found in the mitochondrion membrane. The enzyme catalyses a ubiquinone + NADH + 5 H(+)(in) = a ubiquinol + NAD(+) + 4 H(+)(out). Functionally, core subunit of the mitochondrial membrane respiratory chain NADH dehydrogenase (Complex I) that is believed to belong to the minimal assembly required for catalysis. Complex I functions in the transfer of electrons from NADH to the respiratory chain. The immediate electron acceptor for the enzyme is believed to be ubiquinone. This chain is NADH-ubiquinone oxidoreductase chain 4 (MT-ND4), found in Latimeria chalumnae (Coelacanth).